The following is a 207-amino-acid chain: Ribonuclease HII (207 aa).

Positions 12-201 (DLVAGVDEVG…VRAAWEVREG (190 aa)) constitute an RNase H type-2 domain. The a divalent metal cation site is built by aspartate 18, glutamate 19, and aspartate 110.

It belongs to the RNase HII family. Requires Mn(2+) as cofactor. Mg(2+) serves as cofactor.

Its subcellular location is the cytoplasm. The enzyme catalyses Endonucleolytic cleavage to 5'-phosphomonoester.. Functionally, endonuclease that specifically degrades the RNA of RNA-DNA hybrids. The sequence is that of Ribonuclease HII from Pseudomonas putida (strain ATCC 700007 / DSM 6899 / JCM 31910 / BCRC 17059 / LMG 24140 / F1).